The chain runs to 837 residues: Tuftelin-interacting protein 11 (837 aa).

2 stretches are compositionally biased toward basic and acidic residues: residues 1-13 (MSLSHLYRDGEGR) and 53-64 (VWAERDSDDERP). Disordered regions lie at residues 1 to 21 (MSLSHLYRDGEGRIDDDDDER), 53 to 72 (VWAERDSDDERPSFGGKRAR), and 85 to 133 (LKKG…KGFA). A phosphoserine mark is found at serine 2, serine 59, and serine 98. The span at 91 to 102 (EEAELEDSDDEE) shows a compositional bias: acidic residues. Over residues 103–116 (RPVKQDDFPKDFGP) the composition is skewed to basic and acidic residues. Serine 144 carries the phosphoserine modification. In terms of domain architecture, G-patch spans 149–195 (TKGIGQKLLQKMGYVPGRGLGKNAQGIINPIEAKQRKGKGAVGAYGS). The disordered stretch occupies residues 179 to 236 (IEAKQRKGKGAVGAYGSERTTQSMQDFPVVDSEEEAEEEFQKGLSQWRKDPSGSKKKP). Serine 210 carries the post-translational modification Phosphoserine. Positions 700-705 (VKDKFN) match the Nuclear localization signal motif. The tract at residues 710–734 (IMNRAVSSNVGAYMQPGARENIAYL) is required for nuclear speckle localization.

Belongs to the TFP11/STIP family. As to quaternary structure, identified in the spliceosome C complex. Found in the Intron Large (IL) complex, a post-mRNA release spliceosomal complex containing the excised intron, U2, U5 and U6 snRNPs, and splicing factors. Interacts with TUFT1. Interacts with DHX15; indicative for a recruitment of DHX15 to the IL complex. Interacts with GCFC2.

It is found in the cytoplasm. Its subcellular location is the nucleus. Involved in pre-mRNA splicing, specifically in spliceosome disassembly during late-stage splicing events. Intron turnover seems to proceed through reactions in two lariat-intron associated complexes termed Intron Large (IL) and Intron Small (IS). In cooperation with DHX15 seems to mediate the transition of the U2, U5 and U6 snRNP-containing IL complex to the snRNP-free IS complex leading to efficient debranching and turnover of excised introns. May play a role in the differentiation of ameloblasts and odontoblasts or in the forming of the enamel extracellular matrix. This Macaca fascicularis (Crab-eating macaque) protein is Tuftelin-interacting protein 11 (TFIP11).